The sequence spans 1212 residues: Nucleolar protein 6 (1212 aa).

Disordered stretches follow at residues 1–72 (MGKI…PVSI) and 1156–1212 (KREQ…KSLS). Residues 1197-1212 (LKRKSLIKSRPLKSLS) show a composition bias toward basic residues.

Belongs to the NRAP family. Part of the small subunit (SSU) processome, composed of more than 70 proteins and the RNA chaperone small nucleolar RNA (snoRNA) U3.

The protein localises to the nucleus. It localises to the nucleolus. It is found in the chromosome. Part of the small subunit (SSU) processome, first precursor of the small eukaryotic ribosomal subunit. During the assembly of the SSU processome in the nucleolus, many ribosome biogenesis factors, an RNA chaperone and ribosomal proteins associate with the nascent pre-rRNA and work in concert to generate RNA folding, modifications, rearrangements and cleavage as well as targeted degradation of pre-ribosomal RNA by the RNA exosome. This is Nucleolar protein 6 from Drosophila persimilis (Fruit fly).